Reading from the N-terminus, the 242-residue chain is DNA repair protein RecO (242 aa).

Belongs to the RecO family.

In terms of biological role, involved in DNA repair and RecF pathway recombination. This is DNA repair protein RecO from Xanthobacter autotrophicus (strain ATCC BAA-1158 / Py2).